The primary structure comprises 152 residues: Transcriptional regulator MraZ (152 aa).

SpoVT-AbrB domains lie at Ile-7–Glu-54 and Ala-83–Ala-126.

Belongs to the MraZ family. As to quaternary structure, forms oligomers.

It is found in the cytoplasm. The protein localises to the nucleoid. The protein is Transcriptional regulator MraZ of Hydrogenovibrio crunogenus (strain DSM 25203 / XCL-2) (Thiomicrospira crunogena).